The primary structure comprises 263 residues: LIM and SH3 domain protein 1 (263 aa).

An N-acetylmethionine modification is found at M1. In terms of domain architecture, LIM zinc-binding spans 5–56; that stretch reads CARCGKIVYPTEKVNCLDKYWHKACFHCETCKMTLNMKNYKGYEKKPYCNAH. K42 carries the N6-acetyllysine modification. 2 Nebulin repeats span residues 61 to 95 and 97 to 131; these read SFTMVADTPENLRLKQQSELQSQVRYKEEFEKNKG and GFSVVADTPELQRIKKTQDQISNIKYHEEFEKSRM. At T68 the chain carries Phosphothreonine. K75 is modified (N6-methyllysine). S99 carries the phosphoserine modification. Position 104 is a phosphothreonine (T104). An N6-succinyllysine modification is found at K112. Phosphoserine is present on residues S118 and S134. The segment at 123 to 207 is disordered; that stretch reads HEEFEKSRMG…QRSAPGGGGK (85 aa). The span at 148 to 162 shows a compositional bias: polar residues; sequence DSSSYRRPTEQQQPQ. T156 carries the post-translational modification Phosphothreonine; by PKA. In terms of domain architecture, SH3 spans 204–263; the sequence is GGGKRYRAVYDYSAADEDEVSFQDGDTIVNVQQIDDGWMYGTVERTGDTGMLPANYVEAI.

Interacts with F-actin. Interacts with KBTBD10. Interacts with ANKRD54.

Its subcellular location is the cytoplasm. The protein resides in the cell cortex. It is found in the cytoskeleton. In terms of biological role, plays an important role in the regulation of dynamic actin-based, cytoskeletal activities. Agonist-dependent changes in LASP1 phosphorylation may also serve to regulate actin-associated ion transport activities, not only in the parietal cell but also in certain other F-actin-rich secretory epithelial cell types. The chain is LIM and SH3 domain protein 1 (Lasp1) from Mus musculus (Mouse).